The primary structure comprises 273 residues: Undecaprenyl-diphosphatase (273 aa).

7 consecutive transmembrane segments (helical) span residues 6 to 26, 45 to 65, 90 to 110, 116 to 136, 190 to 210, 222 to 242, and 252 to 272; these read SLLI…LPVS, AKTF…VMFW, LTLI…LVFH, LFNP…LIAA, YAAS…ATVL, ADIP…LIAI, and ISFI…YVVF.

This sequence belongs to the UppP family.

The protein resides in the cell inner membrane. It carries out the reaction di-trans,octa-cis-undecaprenyl diphosphate + H2O = di-trans,octa-cis-undecaprenyl phosphate + phosphate + H(+). In terms of biological role, catalyzes the dephosphorylation of undecaprenyl diphosphate (UPP). Confers resistance to bacitracin. The polypeptide is Undecaprenyl-diphosphatase (Salmonella paratyphi C (strain RKS4594)).